The sequence spans 418 residues: Histidine--tRNA ligase (418 aa).

This sequence belongs to the class-II aminoacyl-tRNA synthetase family. Homodimer.

The protein resides in the cytoplasm. It catalyses the reaction tRNA(His) + L-histidine + ATP = L-histidyl-tRNA(His) + AMP + diphosphate + H(+). This Dehalococcoides mccartyi (strain ATCC BAA-2100 / JCM 16839 / KCTC 5957 / BAV1) protein is Histidine--tRNA ligase.